Reading from the N-terminus, the 419-residue chain is Inositol-tetrakisphosphate 1-kinase (419 aa).

Lys-18 contacts 1D-myo-inositol 1,3,4-trisphosphate. Residues Arg-106 and Lys-157 each coordinate ATP. The ATP-grasp domain maps to Glu-117 to Ser-325. The 1D-myo-inositol 1,3,4-trisphosphate site is built by His-167 and Lys-199. Residues Gln-188–Lys-199, Ser-214, Ser-232, and Ser-236 contribute to the ATP site. Residues Asp-281, Asp-295, and Asn-297 each coordinate Mg(2+). Asn-297 contributes to the 1D-myo-inositol 1,3,4-trisphosphate binding site. An N6-acetyllysine; by EP300 and CREBBP modification is found at Lys-388. Ser-401 bears the Phosphoserine mark. Position 415 is an N6-acetyllysine; by EP300 and CREBBP (Lys-415).

Belongs to the ITPK1 family. As to quaternary structure, monomer. Interacts with GPS1/COPS1. Mg(2+) is required as a cofactor. Post-translationally, acetylation by EP300 and CREBBP destabilizes ITPK1, and down-regulates enzymatic activity. Deacetylated by SIRT1.

It carries out the reaction 1D-myo-inositol 3,4,5,6-tetrakisphosphate + ATP = 1D-myo-inositol 1,3,4,5,6-pentakisphosphate + ADP + H(+). The enzyme catalyses 1D-myo-inositol 1,3,4-trisphosphate + ATP = 1D-myo-inositol 1,3,4,5-tetrakisphosphate + ADP + H(+). It catalyses the reaction 1D-myo-inositol 1,3,4-trisphosphate + ATP = 1D-myo-inositol 1,3,4,6-tetrakisphosphate + ADP + H(+). The catalysed reaction is 1D-myo-inositol 3,4,6-trisphosphate + ATP = 1D-myo-inositol 1,3,4,6-tetrakisphosphate + ADP + H(+). It carries out the reaction 1D-myo-inositol 1,3,4-trisphosphate + 1D-myo-inositol 1,3,4,5,6-pentakisphosphate = 1D-myo-inositol 3,4,5,6-tetrakisphosphate + 1D-myo-inositol 1,3,4,6-tetrakisphosphate. The enzyme catalyses 1D-myo-inositol 1,3,4-trisphosphate + 1D-myo-inositol 1,3,4,5,6-pentakisphosphate = 1D-myo-inositol 3,4,5,6-tetrakisphosphate + 1D-myo-inositol 1,3,4,5-tetrakisphosphate. Kinase that can phosphorylate various inositol polyphosphate such as Ins(3,4,5,6)P4 or Ins(1,3,4)P3. Phosphorylates Ins(3,4,5,6)P4 at position 1 to form Ins(1,3,4,5,6)P5. This reaction is thought to have regulatory importance, since Ins(3,4,5,6)P4 is an inhibitor of plasma membrane Ca(2+)-activated Cl(-) channels, while Ins(1,3,4,5,6)P5 is not. Also phosphorylates Ins(1,3,4)P3 on O-5 and O-6 to form Ins(1,3,4,6)P4, an essential molecule in the hexakisphosphate (InsP6) pathway. Also acts as an inositol polyphosphate phosphatase that dephosphorylates Ins(1,3,4,5)P4 and Ins(1,3,4,6)P4 to Ins(1,3,4)P3, and Ins(1,3,4,5,6)P5 to Ins(3,4,5,6)P4. May also act as an isomerase that interconverts the inositol tetrakisphosphate isomers Ins(1,3,4,5)P4 and Ins(1,3,4,6)P4 in the presence of ADP and magnesium. Probably acts as the rate-limiting enzyme of the InsP6 pathway. Modifies TNF-alpha-induced apoptosis by interfering with the activation of TNFRSF1A-associated death domain. Plays an important role in MLKL-mediated necroptosis. Produces highly phosphorylated inositol phosphates such as inositolhexakisphosphate (InsP6) which bind to MLKL mediating the release of an N-terminal auto-inhibitory region leading to its activation. Essential for activated phospho-MLKL to oligomerize and localize to the cell membrane during necroptosis. The chain is Inositol-tetrakisphosphate 1-kinase (ITPK1) from Bos taurus (Bovine).